We begin with the raw amino-acid sequence, 720 residues long: Putative glutamine--fructose-6-phosphate aminotransferase [isomerizing] (720 aa).

Cysteine 2 acts as the Nucleophile; for GATase activity in catalysis. Positions 2 to 321 (CGIFGYCNFL…DNDTAHIYDG (320 aa)) constitute a Glutamine amidotransferase type-2 domain. A compositionally biased stretch (polar residues) spans 266–280 (STTSTFNHGSSTETP). The disordered stretch occupies residues 266 to 285 (STTSTFNHGSSTETPAENGL). SIS domains follow at residues 393-532 (WLTE…DLVS) and 565-710 (CDKK…VDLP).

The catalysed reaction is D-fructose 6-phosphate + L-glutamine = D-glucosamine 6-phosphate + L-glutamate. The protein operates within nucleotide-sugar biosynthesis; UDP-N-acetyl-alpha-D-glucosamine biosynthesis; alpha-D-glucosamine 6-phosphate from D-fructose 6-phosphate: step 1/1. In terms of biological role, involved in amino sugar synthesis (formation of chitin, supplies the amino sugars of asparagine-linked oligosaccharides of glycoproteins). In Saccharomyces cerevisiae (strain JAY291) (Baker's yeast), this protein is Putative glutamine--fructose-6-phosphate aminotransferase [isomerizing].